A 329-amino-acid polypeptide reads, in one-letter code: GTP 3',8-cyclase (329 aa).

Positions A8 to A234 constitute a Radical SAM core domain. Residue R17 participates in GTP binding. 2 residues coordinate [4Fe-4S] cluster: C24 and C28. Y30 contacts S-adenosyl-L-methionine. C31 contributes to the [4Fe-4S] cluster binding site. R68 contributes to the GTP binding site. G72 serves as a coordination point for S-adenosyl-L-methionine. T99 contacts GTP. S123 is an S-adenosyl-L-methionine binding site. K160 is a GTP binding site. M194 is an S-adenosyl-L-methionine binding site. [4Fe-4S] cluster contacts are provided by C257 and C260. R262–R264 contacts GTP. C274 provides a ligand contact to [4Fe-4S] cluster.

It belongs to the radical SAM superfamily. MoaA family. As to quaternary structure, monomer and homodimer. The cofactor is [4Fe-4S] cluster.

It catalyses the reaction GTP + AH2 + S-adenosyl-L-methionine = (8S)-3',8-cyclo-7,8-dihydroguanosine 5'-triphosphate + 5'-deoxyadenosine + L-methionine + A + H(+). It functions in the pathway cofactor biosynthesis; molybdopterin biosynthesis. Its function is as follows. Catalyzes the cyclization of GTP to (8S)-3',8-cyclo-7,8-dihydroguanosine 5'-triphosphate. The polypeptide is GTP 3',8-cyclase (Shigella dysenteriae serotype 1 (strain Sd197)).